Consider the following 283-residue polypeptide: Thymidylate synthase (283 aa).

Arginine 22 serves as a coordination point for dUMP. The active-site Nucleophile is cysteine 160. DUMP is bound by residues 180-183 (RSCD), asparagine 191, and 221-223 (HIY). A (6R)-5,10-methylene-5,6,7,8-tetrahydrofolate-binding site is contributed by aspartate 183. Serine 282 is a (6R)-5,10-methylene-5,6,7,8-tetrahydrofolate binding site.

This sequence belongs to the thymidylate synthase family. Bacterial-type ThyA subfamily. Homodimer.

The protein localises to the cytoplasm. The catalysed reaction is dUMP + (6R)-5,10-methylene-5,6,7,8-tetrahydrofolate = 7,8-dihydrofolate + dTMP. The protein operates within pyrimidine metabolism; dTTP biosynthesis. In terms of biological role, catalyzes the reductive methylation of 2'-deoxyuridine-5'-monophosphate (dUMP) to 2'-deoxythymidine-5'-monophosphate (dTMP) while utilizing 5,10-methylenetetrahydrofolate (mTHF) as the methyl donor and reductant in the reaction, yielding dihydrofolate (DHF) as a by-product. This enzymatic reaction provides an intracellular de novo source of dTMP, an essential precursor for DNA biosynthesis. The chain is Thymidylate synthase from Mannheimia succiniciproducens (strain KCTC 0769BP / MBEL55E).